The sequence spans 24 residues: Brevinin-1Pd (24 aa).

Cysteines 18 and 24 form a disulfide.

As to expression, expressed by the skin glands.

The protein resides in the secreted. Its function is as follows. Antibacterial activity against Gram-positive bacterium S.aureus and Gram-negative bacterium E.coli. Has activity against C.albicans. The polypeptide is Brevinin-1Pd (Lithobates pipiens (Northern leopard frog)).